Reading from the N-terminus, the 715-residue chain is Polyribonucleotide nucleotidyltransferase (715 aa).

Mg(2+) is bound by residues Asp-490 and Asp-496. Residues 557–616 form the KH domain; the sequence is PRIETMTIPTDKIREVIGSGGKVIREIVETSGAKVDISDDGTIKIASANADSIKKAYDMI. The region spanning 626 to 694 is the S1 motif domain; that stretch reads GKIYVGKVVK…DRGKVRLGMK (69 aa).

It belongs to the polyribonucleotide nucleotidyltransferase family. Requires Mg(2+) as cofactor.

It localises to the cytoplasm. The catalysed reaction is RNA(n+1) + phosphate = RNA(n) + a ribonucleoside 5'-diphosphate. In terms of biological role, involved in mRNA degradation. Catalyzes the phosphorolysis of single-stranded polyribonucleotides processively in the 3'- to 5'-direction. This chain is Polyribonucleotide nucleotidyltransferase, found in Paracoccus denitrificans (strain Pd 1222).